The primary structure comprises 172 residues: Arginine repressor (172 aa).

This sequence belongs to the ArgR family.

The protein localises to the cytoplasm. It functions in the pathway amino-acid biosynthesis; L-arginine biosynthesis [regulation]. In terms of biological role, regulates arginine biosynthesis genes. This chain is Arginine repressor, found in Bifidobacterium adolescentis (strain ATCC 15703 / DSM 20083 / NCTC 11814 / E194a).